The primary structure comprises 657 residues: Translation factor GUF1, mitochondrial (657 aa).

A mitochondrion-targeting transit peptide spans 1–39 (MRGCLQSVKWLTSAVRQSQSLTSSTRFPRRLFNTSTLHY). A tr-type G domain is found at 59 to 239 (ERFRNFCIVA…TVIEQVPAPV (181 aa)). GTP contacts are provided by residues 68 to 75 (AHVDHGKS), 132 to 136 (DTPGH), and 186 to 189 (NKVD).

It belongs to the TRAFAC class translation factor GTPase superfamily. Classic translation factor GTPase family. LepA subfamily.

The protein resides in the mitochondrion inner membrane. It carries out the reaction GTP + H2O = GDP + phosphate + H(+). In terms of biological role, promotes mitochondrial protein synthesis. May act as a fidelity factor of the translation reaction, by catalyzing a one-codon backward translocation of tRNAs on improperly translocated ribosomes. Binds to mitochondrial ribosomes in a GTP-dependent manner. This chain is Translation factor GUF1, mitochondrial, found in Blastomyces gilchristii (strain SLH14081) (Blastomyces dermatitidis).